The following is a 141-amino-acid chain: Hemoglobin subunit alpha-2 (141 aa).

The 141-residue stretch at 1 to 141 (VLSSQDKANV…VKHVLTSKYR (141 aa)) folds into the Globin domain. His58 contacts O2. His87 provides a ligand contact to heme b.

The protein belongs to the globin family. As to quaternary structure, minor hemoglobin is a heterotetramer of two alpha-2 chains and two beta-2 chains. As to expression, red blood cells.

Functionally, involved in oxygen transport from the lung to the various peripheral tissues. The protein is Hemoglobin subunit alpha-2 of Triturus cristatus (Great crested newt).